Reading from the N-terminus, the 428-residue chain is Threonine synthase (428 aa).

Position 107 is an N6-(pyridoxal phosphate)lysine (Lys107).

This sequence belongs to the threonine synthase family. Requires pyridoxal 5'-phosphate as cofactor.

The catalysed reaction is O-phospho-L-homoserine + H2O = L-threonine + phosphate. It participates in amino-acid biosynthesis; L-threonine biosynthesis; L-threonine from L-aspartate: step 5/5. With respect to regulation, is competitively inhibited by L-threo-3-hydroxyhomoserine phosphate. Its function is as follows. Catalyzes the gamma-elimination of phosphate from L-phosphohomoserine and the beta-addition of water to produce L-threonine. To a lesser extent, is able to slowly catalyze the deamination of L-threonine into alpha-ketobutyrate and that of L-serine and 3-chloroalanine into pyruvate. Is also able to rapidly convert vinylglycine to threonine, which proves that the pyridoxal p-quinonoid of vinylglycine is an intermediate in the TS reaction. The polypeptide is Threonine synthase (thrC) (Escherichia coli (strain K12)).